The primary structure comprises 73 residues: Toxin Td4 (73 aa).

Residues I1–C7 form the signal peptide. An LCN-type CS-alpha/beta domain is found at K8–G70. 4 disulfides stabilise this stretch: C18-C69, C22-C44, C30-C50, and C34-C52. Position 71 is an arginine amide (R71).

This sequence belongs to the long (4 C-C) scorpion toxin superfamily. Sodium channel inhibitor family. Beta subfamily. In terms of tissue distribution, expressed by the venom gland.

The protein resides in the secreted. Its function is as follows. Beta toxins bind voltage-independently at site-4 of sodium channels (Nav) and shift the voltage of activation toward more negative potentials thereby affecting sodium channel activation and promoting spontaneous and repetitive firing. The polypeptide is Toxin Td4 (Tityus discrepans (Venezuelan scorpion)).